The chain runs to 211 residues: Calaxin (211 aa).

EF-hand domains lie at 64–99 (TDDM…FLRG), 100–135 (SLEE…SLLK), and 145–180 (GIKD…ETLL). Residues aspartate 77, aspartate 79, aspartate 81, cysteine 83, glutamate 88, aspartate 113, asparagine 115, aspartate 117, glutamate 124, aspartate 158, aspartate 160, aspartate 162, lysine 164, and aspartate 169 each coordinate Ca(2+).

In terms of assembly, component of the outer dynein arm-docking complex along with ODAD1, ODAD2, ODAD3 and ODAD4. Strong expression in the respiratory epithelium. Expressed in the sperm.

The protein resides in the cytoplasm. Its subcellular location is the cytoskeleton. It is found in the cilium axoneme. It localises to the cell projection. The protein localises to the cilium. The protein resides in the flagellum. Component of the outer dynein arm-docking complex (ODA-DC) that mediates outer dynein arms (ODA) binding onto the doublet microtubule. Seems to regulate the assembly of both ODAs and their axonemal docking complex onto ciliary microtubules. Regulates ciliary and flagellar motility and is required for cilia-driven determination of body laterality. In Homo sapiens (Human), this protein is Calaxin.